Consider the following 281-residue polypeptide: Large ribosomal subunit protein uL2 (281 aa).

Positions R213–K281 are disordered.

The protein belongs to the universal ribosomal protein uL2 family. Part of the 50S ribosomal subunit. Forms a bridge to the 30S subunit in the 70S ribosome.

Its function is as follows. One of the primary rRNA binding proteins. Required for association of the 30S and 50S subunits to form the 70S ribosome, for tRNA binding and peptide bond formation. It has been suggested to have peptidyltransferase activity; this is somewhat controversial. Makes several contacts with the 16S rRNA in the 70S ribosome. This Mycoplasmopsis pulmonis (strain UAB CTIP) (Mycoplasma pulmonis) protein is Large ribosomal subunit protein uL2.